Here is a 334-residue protein sequence, read N- to C-terminus: Ribonucleoside-diphosphate reductase small chain (334 aa).

3 residues coordinate Fe cation: Asp-77, Glu-108, and His-111. Tyr-115 is a catalytic residue. 3 residues coordinate Fe cation: Glu-171, Glu-205, and His-208.

The protein belongs to the ribonucleoside diphosphate reductase small chain family. As to quaternary structure, heterotetramer composed of a homodimer of the large subunit (R1) and a homodimer of the small subunit (R2). Larger multisubunit protein complex are also active, composed of (R1)n(R2)n. The cofactor is Fe cation.

It carries out the reaction a 2'-deoxyribonucleoside 5'-diphosphate + [thioredoxin]-disulfide + H2O = a ribonucleoside 5'-diphosphate + [thioredoxin]-dithiol. Ribonucleoside-diphosphate reductase holoenzyme provides the precursors necessary for viral DNA synthesis. Allows virus growth in non-dividing cells. Catalyzes the biosynthesis of deoxyribonucleotides from the corresponding ribonucleotides. The chain is Ribonucleoside-diphosphate reductase small chain from Ornithodoros (relapsing fever ticks).